A 101-amino-acid polypeptide reads, in one-letter code: Interleukin-8 (101 aa).

The signal sequence occupies residues 1–22 (MTSKLAVALLAAFLLSAALCEG). A Citrulline modification is found at R27. Intrachain disulfides connect C34-C61 and C36-C77.

The protein belongs to the intercrine alpha (chemokine CxC) family. Homodimer. Interacts with TNFAIP6 (via Link domain); this interaction interferes with chemokine binding to glycosaminoglycans. Post-translationally, citrullination at Arg-27 prevents proteolysis, and dampens tissue inflammation, it also enhances leukocytosis, possibly through impaired chemokine clearance from the blood circulation.

It localises to the secreted. Chemotactic factor that mediates inflammatory response by attracting neutrophils, basophils, and T-cells to clear pathogens and protect the host from infection. Also plays an important role in neutrophil activation. Released in response to an inflammatory stimulus, exerts its effect by binding to the G-protein-coupled receptors CXCR1 and CXCR2, primarily found in neutrophils, monocytes and endothelial cells. G-protein heterotrimer (alpha, beta, gamma subunits) constitutively binds to CXCR1/CXCR2 receptor and activation by IL8 leads to beta and gamma subunits release from Galpha (GNAI2 in neutrophils) and activation of several downstream signaling pathways including PI3K and MAPK pathways. This chain is Interleukin-8 (CXCL8), found in Cercocebus atys (Sooty mangabey).